A 170-amino-acid chain; its full sequence is Small ribosomal subunit protein uS9 (170 aa).

The tract at residues 1–47 is disordered; sequence MAETTPEQPLEEIDIDSYTTESEVPVEGEYTSESMASAFGEPQPAAG.

This sequence belongs to the universal ribosomal protein uS9 family.

This Streptomyces coelicolor (strain ATCC BAA-471 / A3(2) / M145) protein is Small ribosomal subunit protein uS9 (rpsI).